We begin with the raw amino-acid sequence, 234 residues long: UDP-2,3-diacylglucosamine hydrolase (234 aa).

Mn(2+)-binding residues include D9, H11, D42, N80, and H115. 80–81 (NR) contacts substrate. 5 residues coordinate substrate: D123, S161, K165, K168, and H196. Mn(2+) contacts are provided by H196 and H198.

Belongs to the LpxH family. The cofactor is Mn(2+).

The protein resides in the cell inner membrane. The catalysed reaction is UDP-2-N,3-O-bis[(3R)-3-hydroxytetradecanoyl]-alpha-D-glucosamine + H2O = 2-N,3-O-bis[(3R)-3-hydroxytetradecanoyl]-alpha-D-glucosaminyl 1-phosphate + UMP + 2 H(+). The protein operates within glycolipid biosynthesis; lipid IV(A) biosynthesis; lipid IV(A) from (3R)-3-hydroxytetradecanoyl-[acyl-carrier-protein] and UDP-N-acetyl-alpha-D-glucosamine: step 4/6. In terms of biological role, hydrolyzes the pyrophosphate bond of UDP-2,3-diacylglucosamine to yield 2,3-diacylglucosamine 1-phosphate (lipid X) and UMP by catalyzing the attack of water at the alpha-P atom. Involved in the biosynthesis of lipid A, a phosphorylated glycolipid that anchors the lipopolysaccharide to the outer membrane of the cell. The polypeptide is UDP-2,3-diacylglucosamine hydrolase (Histophilus somni (strain 129Pt) (Haemophilus somnus)).